Reading from the N-terminus, the 231-residue chain is Thymidylate kinase (231 aa).

10-17 is an ATP binding site; it reads GGEGAGKT.

Belongs to the thymidylate kinase family.

It carries out the reaction dTMP + ATP = dTDP + ADP. Functionally, phosphorylation of dTMP to form dTDP in both de novo and salvage pathways of dTTP synthesis. The chain is Thymidylate kinase from Acaryochloris marina (strain MBIC 11017).